The chain runs to 284 residues: Bifunctional protein FolD (284 aa).

NADP(+) contacts are provided by residues 166–168 (GAS) and Ile-232.

It belongs to the tetrahydrofolate dehydrogenase/cyclohydrolase family. In terms of assembly, homodimer.

The enzyme catalyses (6R)-5,10-methylene-5,6,7,8-tetrahydrofolate + NADP(+) = (6R)-5,10-methenyltetrahydrofolate + NADPH. It catalyses the reaction (6R)-5,10-methenyltetrahydrofolate + H2O = (6R)-10-formyltetrahydrofolate + H(+). The protein operates within one-carbon metabolism; tetrahydrofolate interconversion. Functionally, catalyzes the oxidation of 5,10-methylenetetrahydrofolate to 5,10-methenyltetrahydrofolate and then the hydrolysis of 5,10-methenyltetrahydrofolate to 10-formyltetrahydrofolate. The polypeptide is Bifunctional protein FolD (Shewanella oneidensis (strain ATCC 700550 / JCM 31522 / CIP 106686 / LMG 19005 / NCIMB 14063 / MR-1)).